Reading from the N-terminus, the 431-residue chain is Putative serine/threonine-protein kinase B (431 aa).

A Protein kinase domain is found at 20 to 279 (YLNKGIVGLG…VRENFQIPYI (260 aa)). Residues 26–34 (VGLGSYGEG) and K49 contribute to the ATP site. The active-site Proton acceptor is the D147. The PH domain maps to 331-429 (DVTHRGHVNK…WVHAIQRGIG (99 aa)).

The protein belongs to the protein kinase superfamily. Ser/Thr protein kinase family.

The enzyme catalyses L-seryl-[protein] + ATP = O-phospho-L-seryl-[protein] + ADP + H(+). It catalyses the reaction L-threonyl-[protein] + ATP = O-phospho-L-threonyl-[protein] + ADP + H(+). In Trypanosoma brucei brucei, this protein is Putative serine/threonine-protein kinase B (NRKB).